We begin with the raw amino-acid sequence, 185 residues long: Large ribosomal subunit protein bL17 (185 aa).

Belongs to the bacterial ribosomal protein bL17 family. Part of the 50S ribosomal subunit. Contacts protein L32.

This Rhodococcus erythropolis (strain PR4 / NBRC 100887) protein is Large ribosomal subunit protein bL17.